We begin with the raw amino-acid sequence, 145 residues long: D-aminoacyl-tRNA deacylase (145 aa).

The short motif at 137–138 (GP) is the Gly-cisPro motif, important for rejection of L-amino acids element.

This sequence belongs to the DTD family. As to quaternary structure, homodimer.

Its subcellular location is the cytoplasm. The catalysed reaction is glycyl-tRNA(Ala) + H2O = tRNA(Ala) + glycine + H(+). The enzyme catalyses a D-aminoacyl-tRNA + H2O = a tRNA + a D-alpha-amino acid + H(+). Functionally, an aminoacyl-tRNA editing enzyme that deacylates mischarged D-aminoacyl-tRNAs. Also deacylates mischarged glycyl-tRNA(Ala), protecting cells against glycine mischarging by AlaRS. Acts via tRNA-based rather than protein-based catalysis; rejects L-amino acids rather than detecting D-amino acids in the active site. By recycling D-aminoacyl-tRNA to D-amino acids and free tRNA molecules, this enzyme counteracts the toxicity associated with the formation of D-aminoacyl-tRNA entities in vivo and helps enforce protein L-homochirality. The chain is D-aminoacyl-tRNA deacylase from Lactobacillus delbrueckii subsp. bulgaricus (strain ATCC BAA-365 / Lb-18).